The chain runs to 479 residues: Glutamate--tRNA ligase (479 aa).

The short motif at Pro-11–Gly-21 is the 'HIGH' region element. Zn(2+)-binding residues include Cys-108, Cys-110, Cys-135, and Glu-137. Residues Lys-250–Arg-254 carry the 'KMSKS' region motif. Lys-253 serves as a coordination point for ATP.

This sequence belongs to the class-I aminoacyl-tRNA synthetase family. Glutamate--tRNA ligase type 1 subfamily. In terms of assembly, monomer. The cofactor is Zn(2+).

The protein localises to the cytoplasm. It carries out the reaction tRNA(Glu) + L-glutamate + ATP = L-glutamyl-tRNA(Glu) + AMP + diphosphate. Its function is as follows. Catalyzes the attachment of glutamate to tRNA(Glu) in a two-step reaction: glutamate is first activated by ATP to form Glu-AMP and then transferred to the acceptor end of tRNA(Glu). The protein is Glutamate--tRNA ligase of Myxococcus xanthus (strain DK1622).